A 473-amino-acid chain; its full sequence is Glutamyl-tRNA reductase (473 aa).

Substrate is bound by residues 49–52, Ser109, 114–116, and Gln120; these read TCNR and EQQ. Residue Cys50 is the Nucleophile of the active site. 189-194 is a binding site for NADP(+); it reads GAGSMG. Residues 445 to 473 are disordered; sequence SGLDAGSGPQGADGPSAGPTPSAPNPSAE.

Belongs to the glutamyl-tRNA reductase family. As to quaternary structure, homodimer.

It carries out the reaction (S)-4-amino-5-oxopentanoate + tRNA(Glu) + NADP(+) = L-glutamyl-tRNA(Glu) + NADPH + H(+). It functions in the pathway porphyrin-containing compound metabolism; protoporphyrin-IX biosynthesis; 5-aminolevulinate from L-glutamyl-tRNA(Glu): step 1/2. In terms of biological role, catalyzes the NADPH-dependent reduction of glutamyl-tRNA(Glu) to glutamate 1-semialdehyde (GSA). The sequence is that of Glutamyl-tRNA reductase from Mycobacterium ulcerans (strain Agy99).